The sequence spans 213 residues: Reticulon-3 (213 aa).

Residues 1 to 16 (MADTSGPQSSHISSSA) are compositionally biased toward polar residues. Positions 1–20 (MADTSGPQSSHISSSAGEKG) are disordered. A Reticulon domain is found at 25 to 213 (VQDLLYWRDV…LPGALKKKSE (189 aa)). The next 2 membrane-spanning stretches (helical) occupy residues 45–65 (MVLL…YLVL) and 154–174 (VFNG…APIV).

In terms of assembly, homodimer.

It localises to the endoplasmic reticulum membrane. The protein localises to the golgi apparatus membrane. In terms of biological role, may be involved in membrane trafficking in the early secretory pathway. The polypeptide is Reticulon-3 (rtn3) (Xenopus tropicalis (Western clawed frog)).